The sequence spans 348 residues: Putative methylesterase 14, chloroplastic (348 aa).

Disordered stretches follow at residues 1 to 29 (MGNK…MNRS) and 60 to 80 (GSMS…SDPF). The transit peptide at 1–76 (MGNKIISMMK…GSTSTRKRTL (76 aa)) directs the protein to the chloroplast. Residue S77 is modified to Phosphoserine. The active-site Acyl-ester intermediate is S172. Residues D299 and H327 each act as charge relay system in the active site.

The protein belongs to the AB hydrolase superfamily. Methylesterase family.

It localises to the plastid. Its subcellular location is the chloroplast. In terms of biological role, putative methylesterase. This Arabidopsis thaliana (Mouse-ear cress) protein is Putative methylesterase 14, chloroplastic.